The chain runs to 745 residues: Mediator of RNA polymerase II transcription subunit 25 (745 aa).

Positions M1–L226 are interaction with the Mediator complex. The span at S233–Q243 shows a compositional bias: polar residues. 2 disordered regions span residues S233–P266 and L299–G374. Over residues A252–P262 the composition is skewed to low complexity. Positions P324–S342 are enriched in pro residues. The interaction with VP16 stretch occupies residues L389–N543. Residues V395–K545 are interaction with CREBBP. Interaction with RARA regions lie at residues A563–P652 and P639–Q705. A disordered region spans residues L584–D738. Residues G596–P617 are compositionally biased toward low complexity. The segment covering Q618–G631 has biased composition (pro residues). The LXXLL motif motif lies at L645–L649. Positions P652 to Q663 are enriched in pro residues. R723 is subject to Asymmetric dimethylarginine.

It belongs to the Mediator complex subunit 25 family. Component of the Mediator complex, which is composed of MED1, MED4, MED6, MED7, MED8, MED9, MED10, MED11, MED12, MED13, MED13L, MED14, MED15, MED16, MED17, MED18, MED19, MED20, MED21, MED22, MED23, MED24, MED25, MED26, MED27, MED29, MED30, MED31, CCNC, CDK8 and CDC2L6/CDK11. The MED12, MED13, CCNC and CDK8 subunits form a distinct module termed the CDK8 module. Mediator containing the CDK8 module is less active than Mediator lacking this module in supporting transcriptional activation. Individual preparations of the Mediator complex lacking one or more distinct subunits have been variously termed ARC, CRSP, DRIP, PC2, SMCC and TRAP. Interacts with CREBBP. Interacts with ESR1, GR and THRB in a ligand-dependent fashion. Binds the Herpes simplex virus activator VP16. Interacts with RARA and RXRA in a ligand-dependent fashion.

It localises to the nucleus. Component of the Mediator complex, a coactivator involved in the regulated transcription of nearly all RNA polymerase II-dependent genes. Mediator functions as a bridge to convey information from gene-specific regulatory proteins to the basal RNA polymerase II transcription machinery. Mediator is recruited to promoters by direct interactions with regulatory proteins and serves as a scaffold for the assembly of a functional preinitiation complex with RNA polymerase II and the general transcription factors. Required for RARA/RXRA-mediated transcription. In Mus musculus (Mouse), this protein is Mediator of RNA polymerase II transcription subunit 25 (Med25).